A 337-amino-acid chain; its full sequence is Adenylosuccinate synthetase (337 aa).

Residues 12 to 18 (GDEGKGK) and 42 to 44 (GHT) each bind GTP. The Proton acceptor role is filled by aspartate 13. Aspartate 13 and glycine 42 together coordinate Mg(2+). Residues 13 to 16 (DEGK), 40 to 43 (NAGH), threonine 127, arginine 141, glutamine 179, threonine 194, and arginine 256 each bind IMP. The active-site Proton donor is the histidine 43. 252–258 (TVTGRRR) is a substrate binding site. GTP-binding positions include arginine 258, 284-286 (CLD), and 324-326 (STG).

It belongs to the adenylosuccinate synthetase family. As to quaternary structure, homodimer. It depends on Mg(2+) as a cofactor.

It localises to the cytoplasm. It catalyses the reaction IMP + L-aspartate + GTP = N(6)-(1,2-dicarboxyethyl)-AMP + GDP + phosphate + 2 H(+). It participates in purine metabolism; AMP biosynthesis via de novo pathway; AMP from IMP: step 1/2. Plays an important role in the de novo pathway of purine nucleotide biosynthesis. Catalyzes the first committed step in the biosynthesis of AMP from IMP. The sequence is that of Adenylosuccinate synthetase from Methanococcus maripaludis (strain C6 / ATCC BAA-1332).